We begin with the raw amino-acid sequence, 100 residues long: MHLTSREQEKLMLFLAGELAAKRKARGVKLNYPEAIAYIASHLQEAARDGMSVAEVMQYGATLLTVDDVMEGIAEMVHEVQIEATFPDGTKLVTVHNPIR.

It belongs to the urease gamma subunit family. As to quaternary structure, heterotrimer of UreA (gamma), UreB (beta) and UreC (alpha) subunits. Three heterotrimers associate to form the active enzyme.

The protein resides in the cytoplasm. It catalyses the reaction urea + 2 H2O + H(+) = hydrogencarbonate + 2 NH4(+). Its pathway is nitrogen metabolism; urea degradation; CO(2) and NH(3) from urea (urease route): step 1/1. This chain is Urease subunit gamma, found in Actinobacillus pleuropneumoniae serotype 5b (strain L20).